The primary structure comprises 101 residues: Integration host factor subunit alpha (101 aa).

It belongs to the bacterial histone-like protein family. In terms of assembly, heterodimer of an alpha and a beta chain.

Functionally, this protein is one of the two subunits of integration host factor, a specific DNA-binding protein that functions in genetic recombination as well as in transcriptional and translational control. In Maricaulis maris (strain MCS10) (Caulobacter maris), this protein is Integration host factor subunit alpha.